An 83-amino-acid chain; its full sequence is Alpha-neurotoxin NTX-4 (83 aa).

An N-terminal signal peptide occupies residues 1 to 21 (MKTLLLTLLVVTIVCLDLGYT). Disulfide bonds link Cys24-Cys45, Cys38-Cys62, Cys64-Cys75, and Cys76-Cys81.

This sequence belongs to the three-finger toxin family. Short-chain subfamily. Type I alpha-neurotoxin sub-subfamily. Expressed by the venom gland.

The protein resides in the secreted. Binds to muscle nicotinic acetylcholine receptor (nAChR) and inhibit acetylcholine from binding to the receptor, thereby impairing neuromuscular transmission. The chain is Alpha-neurotoxin NTX-4 from Naja sputatrix (Malayan spitting cobra).